The sequence spans 502 residues: Glycerol kinase (502 aa).

Threonine 14 serves as a coordination point for ADP. ATP contacts are provided by threonine 14, threonine 15, and serine 16. Threonine 14 is a sn-glycerol 3-phosphate binding site. Arginine 18 provides a ligand contact to ADP. Sn-glycerol 3-phosphate-binding residues include arginine 84, glutamate 85, and tyrosine 136. Residues arginine 84, glutamate 85, and tyrosine 136 each contribute to the glycerol site. Phosphohistidine; by HPr is present on histidine 232. Aspartate 246 contacts sn-glycerol 3-phosphate. Residues aspartate 246 and glutamine 247 each coordinate glycerol. ADP contacts are provided by threonine 268 and glycine 311. The ATP site is built by threonine 268, glycine 311, glutamine 315, and glycine 412. Residues glycine 412 and asparagine 416 each contribute to the ADP site.

It belongs to the FGGY kinase family. Homotetramer and homodimer (in equilibrium). The phosphoenolpyruvate-dependent sugar phosphotransferase system (PTS), including enzyme I, and histidine-containing protein (HPr) are required for the phosphorylation, which leads to the activation of the enzyme.

It catalyses the reaction glycerol + ATP = sn-glycerol 3-phosphate + ADP + H(+). Its pathway is polyol metabolism; glycerol degradation via glycerol kinase pathway; sn-glycerol 3-phosphate from glycerol: step 1/1. Its activity is regulated as follows. Activated by phosphorylation and inhibited by fructose 1,6-bisphosphate (FBP). Its function is as follows. Key enzyme in the regulation of glycerol uptake and metabolism. Catalyzes the phosphorylation of glycerol to yield sn-glycerol 3-phosphate. The chain is Glycerol kinase from Streptococcus pneumoniae (strain P1031).